The sequence spans 698 residues: Long-chain-fatty-acid--CoA ligase 1 (698 aa).

Residue M1 is modified to N-acetylmethionine. 3'-nitrotyrosine is present on Y9. Y84 carries the post-translational modification Phosphotyrosine. S135 is a glycosylation site (O-linked (GlcNAc) serine). N6-acetyllysine is present on residues K356 and K386. S620 carries the phosphoserine modification. The residue at position 632 (K632) is an N6-acetyllysine.

This sequence belongs to the ATP-dependent AMP-binding enzyme family. Mg(2+) serves as cofactor.

It localises to the microsome membrane. It is found in the mitochondrion outer membrane. The protein resides in the peroxisome membrane. Its subcellular location is the endoplasmic reticulum membrane. It carries out the reaction a long-chain fatty acid + ATP + CoA = a long-chain fatty acyl-CoA + AMP + diphosphate. The enzyme catalyses (5Z,8Z,11Z,14Z)-eicosatetraenoate + ATP + CoA = (5Z,8Z,11Z,14Z)-eicosatetraenoyl-CoA + AMP + diphosphate. The catalysed reaction is 3,7,11,15-tetramethylhexadecanoate + ATP + CoA = phytanoyl-CoA + AMP + diphosphate. It catalyses the reaction hexadecanoate + ATP + CoA = hexadecanoyl-CoA + AMP + diphosphate. It carries out the reaction (E)-hexadec-2-enoate + ATP + CoA = (2E)-hexadecenoyl-CoA + AMP + diphosphate. The enzyme catalyses 2,6,10,14-tetramethylpentadecanoate + ATP + CoA = pristanoyl-CoA + AMP + diphosphate. The catalysed reaction is 14,15-epoxy-(5Z,8Z,11Z)-eicosatrienoate + ATP + CoA = 14,15-epoxy-(5Z,8Z,11Z)-eicosatrienoyl-CoA + AMP + diphosphate. It catalyses the reaction 5-hydroxy-(6E,8Z,11Z,14Z)-eicosatetraenoate + ATP + CoA = 5-hydroxy-(6E,8Z,11Z,14Z)-eicosatetraenoyl-CoA + AMP + diphosphate. It carries out the reaction 12-hydroxy-(5Z,8Z,10E,14Z)-eicosatetraenoate + ATP + CoA = 12-hydroxy-(5Z,8Z,10E,14Z)-eicosatetraenoyl-CoA + AMP + diphosphate. The enzyme catalyses 15-hydroxy-(5Z,8Z,11Z,13E)-eicosatetraenoate + ATP + CoA = 15-hydroxy-(5Z,8Z,11Z,13E)-eicosatetraenoyl-CoA + AMP + diphosphate. The catalysed reaction is (9Z)-octadecenoate + ATP + CoA = (9Z)-octadecenoyl-CoA + AMP + diphosphate. Inhibited at high temperature and by arachidonate. In terms of biological role, catalyzes the conversion of long-chain fatty acids to their active form acyl-CoAs for both synthesis of cellular lipids, and degradation via beta-oxidation. Preferentially uses palmitoleate, oleate and linoleate. Preferentially activates arachidonate than epoxyeicosatrienoic acids (EETs) or hydroxyeicosatrienoic acids (HETEs). In Cavia porcellus (Guinea pig), this protein is Long-chain-fatty-acid--CoA ligase 1.